The primary structure comprises 864 residues: Probable M1 family aminopeptidase 1 (864 aa).

Substrate is bound by residues E149 and G289–N293. H325 serves as a coordination point for Zn(2+). The Proton acceptor role is filled by E326. H329 and E348 together coordinate Zn(2+).

It belongs to the peptidase M1 family. The cofactor is Zn(2+).

This Encephalitozoon cuniculi (strain GB-M1) (Microsporidian parasite) protein is Probable M1 family aminopeptidase 1.